The chain runs to 536 residues: Glutamyl-tRNA(Gln) amidotransferase subunit B, mitochondrial (536 aa).

Residues 1 to 8 (MLRVHRLY) constitute a mitochondrion transit peptide.

It belongs to the GatB/GatE family. GatB subfamily. In terms of assembly, subunit of the heterotrimeric GatFAB amidotransferase (AdT) complex, composed of A, B and F subunits.

Its subcellular location is the mitochondrion. The enzyme catalyses L-glutamyl-tRNA(Gln) + L-glutamine + ATP + H2O = L-glutaminyl-tRNA(Gln) + L-glutamate + ADP + phosphate + H(+). In terms of biological role, allows the formation of correctly charged Gln-tRNA(Gln) through the transamidation of misacylated Glu-tRNA(Gln) in the mitochondria. The reaction takes place in the presence of glutamine and ATP through an activated gamma-phospho-Glu-tRNA(Gln). The chain is Glutamyl-tRNA(Gln) amidotransferase subunit B, mitochondrial from Eremothecium gossypii (strain ATCC 10895 / CBS 109.51 / FGSC 9923 / NRRL Y-1056) (Yeast).